The following is a 151-amino-acid chain: Hemoglobin-2 (151 aa).

The residue at position 2 (Thr2) is an N-acetylthreonine. The Globin domain occupies 3–148 (TLTNPQKAAI…ICKTLGDYMK (146 aa)). His97 provides a ligand contact to heme b.

This sequence belongs to the globin family. In terms of assembly, homotetramer.

The protein localises to the cytoplasm. The polypeptide is Hemoglobin-2 (Phacoides pectinatus (Thick lucine)).